A 432-amino-acid chain; its full sequence is MARNVVVIGTQWGDEGKGKIVDWLTDRATGVVRFQGGHNAGHTLVVGGEKTVLHLIPSGILRENVTCYIGNGVVLSPGALLEEVDMLEQAGVDVSGRLRISETCPLILPYHIAVDGARELAKGMEKIGTTGRGIGPAYEDKVARRAIRLQDLFRPERLACKLKEVLDYHNFLLKNYYHAATVDYHQVLDDCQIKAERIRPMVADVPKLLFEASQADNNLLFEGAQGALLDIDHGTYPFVTSSNCIAGAASVGSGVGPQMLNYVLGITKAYTTRVGSGPFPTELSDATGEHLAQRGNEFGSTTGRPRRCGWFDAVAARRSIQINGVSGLCITKLDVLDGLETLRIGVGYKSKQSGEMYDALPFGADDLAAAEPVYEELPGWQERTAGIRNFDQLPQAAQNYLKRMEEVCQTPISMISTGPDRTETIVFHHPFG.

GTP-binding positions include 13-19 (GDEGKGK) and 41-43 (GHT). Aspartate 14 acts as the Proton acceptor in catalysis. Aspartate 14 and glycine 41 together coordinate Mg(2+). Residues 14 to 17 (DEGK), 39 to 42 (NAGH), threonine 130, arginine 144, glutamine 225, threonine 240, and arginine 304 each bind IMP. Histidine 42 functions as the Proton donor in the catalytic mechanism. 300–306 (STTGRPR) contacts substrate. Residues arginine 306, 332–334 (KLD), and 416–418 (STG) contribute to the GTP site.

Belongs to the adenylosuccinate synthetase family. As to quaternary structure, homodimer. Mg(2+) is required as a cofactor.

The protein localises to the cytoplasm. The catalysed reaction is IMP + L-aspartate + GTP = N(6)-(1,2-dicarboxyethyl)-AMP + GDP + phosphate + 2 H(+). The protein operates within purine metabolism; AMP biosynthesis via de novo pathway; AMP from IMP: step 1/2. In terms of biological role, plays an important role in the de novo pathway of purine nucleotide biosynthesis. Catalyzes the first committed step in the biosynthesis of AMP from IMP. The protein is Adenylosuccinate synthetase of Nitrosomonas europaea (strain ATCC 19718 / CIP 103999 / KCTC 2705 / NBRC 14298).